The sequence spans 254 residues: tRNA uridine(34) hydroxylase (254 aa).

Residues 123 to 217 (QDPNVILLDT…YLESIPESES (95 aa)) enclose the Rhodanese domain. Catalysis depends on C177, which acts as the Cysteine persulfide intermediate.

The protein belongs to the TrhO family.

It catalyses the reaction uridine(34) in tRNA + AH2 + O2 = 5-hydroxyuridine(34) in tRNA + A + H2O. Functionally, catalyzes oxygen-dependent 5-hydroxyuridine (ho5U) modification at position 34 in tRNAs. The polypeptide is tRNA uridine(34) hydroxylase (Legionella pneumophila (strain Corby)).